The sequence spans 43 residues: Holotricin-1 (43 aa).

3 disulfides stabilise this stretch: C3-C34, C20-C39, and C24-C41.

The protein belongs to the invertebrate defensin family. Type 1 subfamily. As to expression, hemolymph.

Its subcellular location is the secreted. In terms of biological role, shows potent antibacterial activity against Gram-positive bacteria. The protein is Holotricin-1 of Holotrichia diomphalia (Korean black chafer).